The primary structure comprises 259 residues: Small ribosomal subunit protein uS2 (259 aa).

It belongs to the universal ribosomal protein uS2 family.

The protein is Small ribosomal subunit protein uS2 of Streptococcus pneumoniae (strain CGSP14).